The sequence spans 128 residues: Small ribosomal subunit protein uS12 (128 aa).

The segment at 1 to 24 (MPTFNQLVKYGREKRKKKSKAPAL) is disordered. Asp89 carries the 3-methylthioaspartic acid modification. The interval 105 to 128 (AGVEGRRQSRSKYGTKRPKEEKGG) is disordered.

It belongs to the universal ribosomal protein uS12 family. As to quaternary structure, part of the 30S ribosomal subunit. Contacts proteins S8 and S17. May interact with IF1 in the 30S initiation complex.

Functionally, with S4 and S5 plays an important role in translational accuracy. Interacts with and stabilizes bases of the 16S rRNA that are involved in tRNA selection in the A site and with the mRNA backbone. Located at the interface of the 30S and 50S subunits, it traverses the body of the 30S subunit contacting proteins on the other side and probably holding the rRNA structure together. The combined cluster of proteins S8, S12 and S17 appears to hold together the shoulder and platform of the 30S subunit. This Aquifex aeolicus (strain VF5) protein is Small ribosomal subunit protein uS12.